Here is a 292-residue protein sequence, read N- to C-terminus: Protein LicB (292 aa).

EamA domains follow at residues 70-139 (ALSG…LLAI) and 160-286 (LGWS…VTLY).

This is Protein LicB (licB) from Haemophilus influenzae (strain ATCC 51907 / DSM 11121 / KW20 / Rd).